A 378-amino-acid chain; its full sequence is Alanine racemase (378 aa).

Lys40 acts as the Proton acceptor; specific for D-alanine in catalysis. The residue at position 40 (Lys40) is an N6-(pyridoxal phosphate)lysine. Position 140 (Arg140) interacts with substrate. Tyr270 functions as the Proton acceptor; specific for L-alanine in the catalytic mechanism. A substrate-binding site is contributed by Met317.

It belongs to the alanine racemase family. Pyridoxal 5'-phosphate is required as a cofactor.

It carries out the reaction L-alanine = D-alanine. The protein operates within amino-acid biosynthesis; D-alanine biosynthesis; D-alanine from L-alanine: step 1/1. Catalyzes the interconversion of L-alanine and D-alanine. May also act on other amino acids. This chain is Alanine racemase (alr), found in Lacticaseibacillus paracasei (strain ATCC 334 / BCRC 17002 / CCUG 31169 / CIP 107868 / KCTC 3260 / NRRL B-441) (Lactobacillus paracasei).